The primary structure comprises 234 residues: 1-(5-phosphoribosyl)-5-[(5-phosphoribosylamino)methylideneamino] imidazole-4-carboxamide isomerase (234 aa).

Residue aspartate 9 is the Proton acceptor of the active site. The active-site Proton donor is the aspartate 131.

This sequence belongs to the HisA/HisF family.

The protein resides in the cytoplasm. It catalyses the reaction 1-(5-phospho-beta-D-ribosyl)-5-[(5-phospho-beta-D-ribosylamino)methylideneamino]imidazole-4-carboxamide = 5-[(5-phospho-1-deoxy-D-ribulos-1-ylimino)methylamino]-1-(5-phospho-beta-D-ribosyl)imidazole-4-carboxamide. It functions in the pathway amino-acid biosynthesis; L-histidine biosynthesis; L-histidine from 5-phospho-alpha-D-ribose 1-diphosphate: step 4/9. This chain is 1-(5-phosphoribosyl)-5-[(5-phosphoribosylamino)methylideneamino] imidazole-4-carboxamide isomerase, found in Staphylococcus aureus (strain bovine RF122 / ET3-1).